Reading from the N-terminus, the 436-residue chain is F-box/LRR-repeat protein At2g40920 (436 aa).

One can recognise an F-box domain in the interval Glu48 to Val98. LRR repeat units follow at residues Asn276–Asp301 and Tyr393–Lys416.

This Arabidopsis thaliana (Mouse-ear cress) protein is F-box/LRR-repeat protein At2g40920.